Consider the following 160-residue polypeptide: MAEKTYPMTLEEKEKLEKELEELKLVRRPEIVERIKIARSYGDLSENSEYEAAKDEQAFVEGQISTIETKIRYAEIVNSDAVAADEVAIGKTVTVQEVGETEEEVYHIVGAAGADVFANKISNESPIGHALIGKKTGDVATIETPAGSYDVKILKVEKTK.

Residues M1–I31 are a coiled coil.

This sequence belongs to the GreA/GreB family.

Functionally, necessary for efficient RNA polymerase transcription elongation past template-encoded arresting sites. The arresting sites in DNA have the property of trapping a certain fraction of elongating RNA polymerases that pass through, resulting in locked ternary complexes. Cleavage of the nascent transcript by cleavage factors such as GreA or GreB allows the resumption of elongation from the new 3'terminus. GreA releases sequences of 2 to 3 nucleotides. The chain is Transcription elongation factor GreA from Streptococcus suis (strain 98HAH33).